The primary structure comprises 910 residues: Staphylococcal nuclease domain-containing protein 1 (910 aa).

The residue at position 2 (A2) is an N-acetylalanine. TNase-like domains lie at 18 to 166, 193 to 328, and 341 to 496; these read TVQR…MWSE, KPVN…IWRD, and KQFV…LHSK. T103 carries the phosphothreonine modification. At K193 the chain carries N6-acetyllysine. Residue T240 is modified to Phosphothreonine. 2 consecutive short sequence motifs (nuclear localization signal) follow at residues 321-325 and 388-392; these read RRLRI and KKLRP. S426 is subject to Phosphoserine. K513 is covalently cross-linked (Glycyl lysine isopeptide (Lys-Gly) (interchain with G-Cter in SUMO2)). The region spanning 525-660 is the TNase-like 4 domain; the sequence is GRSEAVVEYV…KQKKEKVWAH (136 aa). Position 641 is an N6-acetyllysine (K641). Residue S645 is modified to Phosphoserine. Positions 729-787 constitute a Tudor domain; it reads APRRGEFCIAKFVDGEWYRARVEKVESPAKIHVFYIDYGNREVLPSTRLGTLSPAFSTR. Position 779 is a phosphothreonine (T779). S781, S785, and S909 each carry phosphoserine.

As to quaternary structure, forms a ternary complex with STAT6 and POLR2A. Associates with the RNA-induced silencing complex (RISC). Interacts with the RISC components AGO2, FMR1 and TNRC6A. Interacts with GTF2E1 and GTF2E2. Interacts with PIM1. Interacts with STAT5. Interacts with SYT11 (via C2 2 domain); the interaction with SYT11 is direct. In terms of assembly, (Microbial infection) Interacts with EAV NSP1. Binds to acidic transactivation domain of EBNA2. Interacts with SARS-CoV-2 NSP9. Post-translationally, phosphorylated by PIM1 in vitro. Ubiquitously expressed.

Its subcellular location is the cytoplasm. The protein resides in the nucleus. The protein localises to the melanosome. The enzyme catalyses Endonucleolytic cleavage to nucleoside 3'-phosphates and 3'-phosphooligonucleotide end-products.. Endonuclease that mediates miRNA decay of both protein-free and AGO2-loaded miRNAs. As part of its function in miRNA decay, regulates mRNAs involved in G1-to-S phase transition. Functions as a bridging factor between STAT6 and the basal transcription factor. Plays a role in PIM1 regulation of MYB activity. Functions as a transcriptional coactivator for STAT5. Functionally, (Microbial infection) Functions as a transcriptional coactivator for the Epstein-Barr virus nuclear antigen 2 (EBNA2). Its function is as follows. (Microbial infection) Promotes SARS-CoV-2 RNA synthesis by binding to negative-sense RNA and the viral protein nsp9. The polypeptide is Staphylococcal nuclease domain-containing protein 1 (SND1) (Homo sapiens (Human)).